Consider the following 360-residue polypeptide: Xanthohumol 4-O-methyltransferase (360 aa).

Aspartate 227 contacts S-adenosyl-L-methionine. Histidine 266 acts as the Proton acceptor in catalysis.

It belongs to the class I-like SAM-binding methyltransferase superfamily. Cation-independent O-methyltransferase family. In terms of assembly, homodimer. In terms of tissue distribution, highly expressed in lupulin glands. Detected in cones, male flowers and roots.

It localises to the cytoplasm. It catalyses the reaction xanthohumol + S-adenosyl-L-methionine = 4-O-methylxanthohumol + S-adenosyl-L-homocysteine + H(+). It carries out the reaction desmethylxanthohumol + S-adenosyl-L-methionine = xanthohumol + S-adenosyl-L-homocysteine + H(+). The catalysed reaction is isoliquiritigenin + S-adenosyl-L-methionine = 2'-O-methylisoliquiritigenin + S-adenosyl-L-homocysteine + H(+). The enzyme catalyses trans-resveratrol + S-adenosyl-L-methionine = 3-methoxy-4',5-dihydroxy-trans-stilbene + S-adenosyl-L-homocysteine + H(+). Its pathway is secondary metabolite biosynthesis. Inhibited by S-adenosyl homocysteine. Involved in the biosynthesis of prenylated phenolics natural products which contribute to the bitter taste of beer and display broad biological activities. O-methyltransferase with a low substrate selectivity. Methylates chalconaringenin, desmethylxanthohumol, xanthohumol, isoliquiritigenin, butein, 2',4-dihydroxychalcone, resveratrol, genistein and guaiacol. Catalyzes the biosynthesis of 2',4'-dihydroxy-4,6'-dimethoxy-3'-prenylchalcone (4-O-methylxanthohumol). This is Xanthohumol 4-O-methyltransferase from Humulus lupulus (European hop).